Here is a 2595-residue protein sequence, read N- to C-terminus: Glucosylceramide transporter ABCA12 (2595 aa).

Residues 23 to 43 (PLWTLVLILWPVIIFIILAIT) traverse the membrane as a helical segment. Residues asparagine 156, asparagine 174, asparagine 214, asparagine 275, asparagine 333, asparagine 367, asparagine 383, asparagine 412, asparagine 435, asparagine 528, asparagine 543, asparagine 577, asparagine 608, asparagine 623, asparagine 648, asparagine 752, asparagine 826, asparagine 920, and asparagine 963 are each glycosylated (N-linked (GlcNAc...) asparagine). The next 3 helical transmembrane spans lie at 1065–1085 (VSYS…AAFV), 1112–1132 (FAWL…LIII), and 1145–1165 (FILF…SYLI). Residue asparagine 1170 is glycosylated (N-linked (GlcNAc...) asparagine). 3 helical membrane-spanning segments follow: residues 1174–1194 (IAAL…IVLV), 1200–1220 (LSYV…SYAS), and 1250–1270 (FGWL…IAWY). The 232-residue stretch at 1346–1577 (VALHGVTKIY…FGDGYHLTLT (232 aa)) folds into the ABC transporter 1 domain. 1378-1385 (GPNGAGKT) contacts ATP. N-linked (GlcNAc...) asparagine glycans are attached at residues asparagine 1524, asparagine 1663, and asparagine 1704. The chain crosses the membrane as a helical span at residues 1747-1767 (LIAQVILPIVFVTTAMGLGTL). 6 N-linked (GlcNAc...) asparagine glycosylation sites follow: asparagine 1769, asparagine 1819, asparagine 1835, asparagine 1876, asparagine 1921, and asparagine 1952. Helical transmembrane passes span 1979 to 1999 (ATIS…GYSV), 2035 to 2055 (FIYD…IIAI), 2072 to 2092 (LLLL…AGLF), and 2103 to 2123 (VCVN…VYFL). Asparagine 2178 carries an N-linked (GlcNAc...) asparagine glycan. Residues 2187-2207 (GAMFVALVSQGTMFFSLRLLI) form a helical membrane-spanning segment. Residues asparagine 2208 and asparagine 2223 are each glycosylated (N-linked (GlcNAc...) asparagine). The 236-residue stretch at 2254–2489 (VQLYCLTKTY…FGRGFTVKVH (236 aa)) folds into the ABC transporter 2 domain. The helical transmembrane segment at 2270–2290 (IIAVNNISIGIPAGECFGLLG) threads the bilayer. 2290–2297 (GVNGAGKT) serves as a coordination point for ATP. Residues asparagine 2318, asparagine 2542, and asparagine 2547 are each glycosylated (N-linked (GlcNAc...) asparagine). Residues 2571-2595 (SYETADTSSQGSTISVDSQDDQMES) form a disordered region. Positions 2574–2587 (TADTSSQGSTISVD) are enriched in polar residues.

The protein belongs to the ABC transporter superfamily. ABCA family. Interacts with NR1H2 and ABCA1; this interaction is required for ABCA1 localization to the cell surface and is necessary for its normal activity and stability. As to expression, mainly expressed in the stomach, placenta, testis and fetal brain. Expressed in the upper epidermal layers, mainly the granular layers, of skin. Expressed throughout the normal interfollicular epidermis with prominent expression in the stratum granulosum. Expressed in alpha and beta cells of pancreatic islets.

It localises to the cytoplasmic vesicle. The protein resides in the secretory vesicle membrane. Its subcellular location is the golgi apparatus membrane. The enzyme catalyses ATP + H2O + phospholipidSide 1 = ADP + phosphate + phospholipidSide 2.. It catalyses the reaction a beta-D-glucosylceramide(in) + ATP + H2O = a beta-D-glucosylceramide(out) + ADP + phosphate + H(+). Transports lipids such as glucosylceramides from the outer to the inner leaflet of lamellar granules (LGs) membrane, whereby the lipids are finally transported to the keratinocyte periphery via the trans-Golgi network and LGs and released to the apical surface of the granular keratinocytes to form lipid lamellae in the stratum corneum of the epidermis, which is essential for skin barrier function. In the meantime, participates in the transport of the lamellar granules-associated proteolytic enzymes, in turn regulates desquamation and keratinocyte differentiation. Furthermore, is essential for the regulation of cellular cholesterol homeostasis by regulating ABCA1-dependent cholesterol efflux from macrophages through interaction with NR1H2 and ABCA1. Plays pleiotropic roles in regulating glucose stimulated insulin secretion from beta cells, regulating the morphology and fusion of insulin granules, lipid raft abundance and the actin cytoskeleton. Also involved in lung surfactant biogenesis. This chain is Glucosylceramide transporter ABCA12, found in Homo sapiens (Human).